Consider the following 301-residue polypeptide: MADNSSDEYEDENNKEKKKTSQLTPQRGFSENDDDDDDDDSSETDSDDDDEEHGAPLEGAYDPADYEHLPVSAEVKELFQYISRYTPQLIDLDHKLKPFIPDFIPAVGDIDAFLKVPRPDGKPDNLGLLVLDEPSTKQSDPTVLSLWLTENSKQHNITQHMKVKSLEDAEKNPKAIDTWIESISELHRSKPPATVHYTRPMPDIDTLMQEWSPEFEELLGKVSLPTAEIDCSLAEYIDMICAILDIPVYKSRIQSLHLLFSLYSEFKNSQHFKALAEGKTAFTPPSNSNSQAGDAETLTFS.

Acidic residues-rich tracts occupy residues Met1–Asn13 and Glu31–Glu52. Disordered regions lie at residues Met1–Pro63 and Thr280–Ser301. At Thr283 the chain carries Phosphothreonine. The span at Thr283–Ser301 shows a compositional bias: polar residues.

The protein belongs to the IFT46 family. In terms of assembly, component of the IFT complex B, at least composed of IFT20, IFT22, IFT25, IFT27, IFT46, IFT52, TRAF3IP1/IFT54, IFT57, IFT74, IFT80, IFT81, and IFT88. Interacts with IFT57, IFT88 and DAW1. Interacts with ARL13B. Interacts with IFT56. Interacts with TTC25. Interacts with IFT70B.

It is found in the cytoplasm. The protein resides in the cytoskeleton. It localises to the cilium basal body. Its subcellular location is the cell projection. The protein localises to the cilium. Its function is as follows. Forms part of a complex involved in intraflagellar transport (IFT), the bi-directional movement of particles required for the assembly, maintenance and functioning of primary cilia. May play a role in chondrocyte maturation and skeletogenesis. The chain is Intraflagellar transport protein 46 homolog (IFT46) from Bos taurus (Bovine).